The chain runs to 553 residues: Undecaprenyl phosphate-alpha-4-amino-4-deoxy-L-arabinose arabinosyl transferase 2 (553 aa).

Transmembrane regions (helical) follow at residues 6-26 (ASKI…LFPL), 85-105 (FAVR…IYLL), 115-135 (VAFV…VGTY), 137-157 (VLDP…FWAL), 178-198 (MAFM…MIPV), 208-228 (MLLY…PWVL), 261-281 (FWYY…LLPG), 295-315 (ELFF…IAKG), 317-337 (LPTY…KYGV), 352-372 (GYIN…IQLV), 386-406 (WVLA…CSTL), and 410-430 (HWLW…QAIP).

The protein belongs to the glycosyltransferase 83 family.

It localises to the cell inner membrane. It carries out the reaction 4-amino-4-deoxy-alpha-L-arabinopyranosyl di-trans,octa-cis-undecaprenyl phosphate + lipid IVA = lipid IIA + di-trans,octa-cis-undecaprenyl phosphate.. Its pathway is lipopolysaccharide metabolism; 4-amino-4-deoxy-beta-L-arabinose-lipid A biosynthesis. In terms of biological role, catalyzes the transfer of the L-Ara4N moiety of the glycolipid undecaprenyl phosphate-alpha-L-Ara4N to lipid A. The modified arabinose is attached to lipid A and is required for resistance to polymyxin and cationic antimicrobial peptides. The polypeptide is Undecaprenyl phosphate-alpha-4-amino-4-deoxy-L-arabinose arabinosyl transferase 2 (Proteus mirabilis (strain HI4320)).